The chain runs to 568 residues: Urease subunit alpha (568 aa).

The Urease domain occupies 131–568 (GGMDAHIHFI…LPLAQRYFLY (438 aa)). 3 residues coordinate Ni(2+): histidine 136, histidine 138, and lysine 219. Lysine 219 carries the post-translational modification N6-carboxylysine. Position 221 (histidine 221) interacts with substrate. Positions 248 and 274 each coordinate Ni(2+). The active-site Proton donor is the histidine 322. A Ni(2+)-binding site is contributed by aspartate 362.

Belongs to the metallo-dependent hydrolases superfamily. Urease alpha subunit family. As to quaternary structure, heterotrimer of UreA (gamma), UreB (beta) and UreC (alpha) subunits. Three heterotrimers associate to form the active enzyme. Ni cation serves as cofactor. In terms of processing, carboxylation allows a single lysine to coordinate two nickel ions.

Its subcellular location is the cytoplasm. The catalysed reaction is urea + 2 H2O + H(+) = hydrogencarbonate + 2 NH4(+). It participates in nitrogen metabolism; urea degradation; CO(2) and NH(3) from urea (urease route): step 1/1. This Cereibacter sphaeroides (strain ATCC 17025 / ATH 2.4.3) (Rhodobacter sphaeroides) protein is Urease subunit alpha.